The chain runs to 188 residues: MYKFDYLVFIGRFQPFHFAHLQTIQIALQQSREVIIALGSAQPERNIKNPFLAEERQKMILANFSAEDQARIHFVNIIDVYNDQKWVEQVKQLVNAIIESRSHVGLIGHFKDESSYYLKLFPEWTMVELESLKESMSATPMREAYYEGKIIESAFPEGTIQFLKTFQDSEIYKQLQQKYRAQDSSNLI.

The protein belongs to the archaeal NMN adenylyltransferase family.

It carries out the reaction beta-nicotinamide D-ribonucleotide + ATP + H(+) = diphosphate + NAD(+). It catalyses the reaction nicotinate beta-D-ribonucleotide + ATP + H(+) = deamido-NAD(+) + diphosphate. It functions in the pathway cofactor biosynthesis; NAD(+) biosynthesis; NAD(+) from nicotinamide D-ribonucleotide: step 1/1. The protein operates within cofactor biosynthesis; NAD(+) biosynthesis; deamido-NAD(+) from nicotinate D-ribonucleotide: step 1/1. In terms of biological role, dual substrate specificity enzyme that catalyzes the formation of NAD(+) from nicotinamide mononucleotide (NMN) and the formation of deamido-NAD(+) (NaAD) from nicotinate mononucleotide (NaMN). Shows nearly identical catalytic efficiency for both physiological substrates. Plays an essential role in all three routes of NAD biogenesis, de novo synthesis as well as the deamidating and nondeamidating salvage pathways. This chain is Nicotinamide/nicotinic acid mononucleotide adenylyltransferase, found in Acinetobacter baylyi (strain ATCC 33305 / BD413 / ADP1).